A 166-amino-acid polypeptide reads, in one-letter code: Spiderine-1a (166 aa).

A signal peptide spans 1 to 18; it reads MKFALVLLGVCAFYLVNA. A propeptide spanning residues 19-58 is cleaved from the precursor; sequence TGDLETELEASELQELQEALDLIGETPLESLEAEELEEAR. Residues 59–99 are linear cationic cytotoxin domain; it reads KFKWGKLFSTAKKLYKKGKKLSKNKNFKKALKFGKQLAKNL. Residues 113–166 form the Oxytoxin-type inhibitor cystine knot (ICK) domain; sequence NNKCWAIGTTCSDDCDCCPEHHCHCPAGKWLPGLFRCTCQVTESDKVNKCPPAE. Disulfide bonds link Cys116–Cys130, Cys123–Cys135, Cys127–Cys162, Cys129–Cys151, and Cys137–Cys149.

It belongs to the spiderine family. Cationic/spiderine subfamily. In terms of tissue distribution, expressed by the venom gland.

The protein resides in the secreted. Has antimicrobial, insecticidal, cytolytic and cytotoxic activity. Active against E.coli DH5alpha, E.faecalis VKM B 871, B.subtilis VKM B 501, A.globiformis VKM Ac 1112, P.aeruginosa PAO1 and S.aureus 209P in submicromolar or low micromolar ranges. Lyses human erythrocytes. Kills HeLA and A549 cells. The chain is Spiderine-1a from Oxyopes takobius (Lynx spider).